Consider the following 606-residue polypeptide: Polypeptide N-acetylgalactosaminyltransferase 9 (606 aa).

Residues 1 to 6 (MAVARK) lie on the Cytoplasmic side of the membrane. The helical; Signal-anchor for type II membrane protein transmembrane segment at 7–29 (IRTLLTVNILVFVGIVLFSVYCR) threads the bilayer. Residues 30-606 (LQGRSQELVR…IRNWIKHARH (577 aa)) are Lumenal-facing. Residues 43–62 (GGCRPRPATPAPGSPLRSGG) are disordered. Disulfide bonds link Cys-144-Cys-375 and Cys-366-Cys-445. Residues 153–264 (LPQVSVVFIF…TGWAEPALSR (112 aa)) are catalytic subdomain A. Positions 194 and 225 each coordinate substrate. Mn(2+)-binding residues include Asp-248, His-250, and His-380. A catalytic subdomain B region spans residues 321 to 383 (PIRTPAMIGC…PCSRVAHIER (63 aa)). Arg-383 and Tyr-388 together coordinate substrate. A glycan (N-linked (GlcNAc...) asparagine) is linked at Asn-463. Residues 467–603 (TYGEVRNSKA…KWMIRNWIKH (137 aa)) enclose the Ricin B-type lectin domain. Intrachain disulfides connect Cys-480–Cys-496, Cys-528–Cys-543, and Cys-570–Cys-590.

It belongs to the glycosyltransferase 2 family. GalNAc-T subfamily. It depends on Mn(2+) as a cofactor.

It localises to the golgi apparatus membrane. The enzyme catalyses L-seryl-[protein] + UDP-N-acetyl-alpha-D-galactosamine = a 3-O-[N-acetyl-alpha-D-galactosaminyl]-L-seryl-[protein] + UDP + H(+). It carries out the reaction L-threonyl-[protein] + UDP-N-acetyl-alpha-D-galactosamine = a 3-O-[N-acetyl-alpha-D-galactosaminyl]-L-threonyl-[protein] + UDP + H(+). Its pathway is protein modification; protein glycosylation. Catalyzes the initial reaction in O-linked oligosaccharide biosynthesis, the transfer of an N-acetyl-D-galactosamine residue to a serine or threonine residue on the protein receptor. Does not glycosylate apomucin or SDC3. In Macaca fascicularis (Crab-eating macaque), this protein is Polypeptide N-acetylgalactosaminyltransferase 9 (GALNT9).